We begin with the raw amino-acid sequence, 415 residues long: tRNA(Met) cytidine acetate ligase (415 aa).

ATP is bound by residues 7–20, glycine 101, asparagine 162, and 187–188; these read VVEY…HRYH and RI.

Belongs to the TmcAL family.

The protein localises to the cytoplasm. The catalysed reaction is cytidine(34) in elongator tRNA(Met) + acetate + ATP = N(4)-acetylcytidine(34) in elongator tRNA(Met) + AMP + diphosphate. Functionally, catalyzes the formation of N(4)-acetylcytidine (ac(4)C) at the wobble position of elongator tRNA(Met), using acetate and ATP as substrates. First activates an acetate ion to form acetyladenylate (Ac-AMP) and then transfers the acetyl group to tRNA to form ac(4)C34. In Bacillus velezensis (strain DSM 23117 / BGSC 10A6 / LMG 26770 / FZB42) (Bacillus amyloliquefaciens subsp. plantarum), this protein is tRNA(Met) cytidine acetate ligase.